The following is a 79-amino-acid chain: uncharacterized protein (79 aa).

It belongs to the UPF0440 family.

This is an uncharacterized protein from Methanocella arvoryzae (strain DSM 22066 / NBRC 105507 / MRE50).